The primary structure comprises 465 residues: Mothers against decapentaplegic homolog 5 (465 aa).

Thr-2 carries the N-acetylthreonine modification. One can recognise an MH1 domain in the interval 13–137; that stretch reads PAVKRLLGWK…YKRVESPVLP (125 aa). Zn(2+)-binding residues include Cys-65, Cys-110, Cys-122, and His-127. Positions 163 to 243 are disordered; sequence NEPHMPQNAT…GQDNSQPMDT (81 aa). A compositionally biased stretch (polar residues) spans 169–182; that stretch reads QNATFPDSFHQPNS. The segment covering 186 to 197 has biased composition (pro residues); that stretch reads PLSPNSPYPPSP. The segment covering 198 to 214 has biased composition (low complexity); that stretch reads ASSTYPNSPASSGPGSP. Over residues 234 to 243 the composition is skewed to polar residues; it reads GQDNSQPMDT. In terms of domain architecture, MH2 spans 271–465; the sequence is WCSIVYYELN…SPLNPISSVS (195 aa). 2 positions are modified to phosphoserine: Ser-463 and Ser-465.

This sequence belongs to the dwarfin/SMAD family. Homodimer. Forms trimers with the co-SMAD SMAD4. Interacts with PEBP2-alpha subunit and SMURF1. Interacts with SUV39H1 and SUV39H2. Interacts (via MH2 domain) with LEMD3. Interacts with WWP1. Interacts with TMEM119. Interacts with ZNF8. Interacts with RANBP3L. Interacts with HK1. Interacts with HGS; this interaction attenuates BMP signaling. Phosphorylated on serine by BMP (bone morphogenetic proteins) type 1 receptor kinase. Post-translationally, ubiquitin-mediated proteolysis by SMAD-specific E3 ubiquitin ligase SMURF1.

The protein localises to the cytoplasm. The protein resides in the nucleus. Its subcellular location is the mitochondrion. In terms of biological role, transcriptional regulator that plays a role in various cellular processes including embryonic development, cell differentiation, angiogenesis and tissue homeostasis. Upon BMP ligand binding to their receptors at the cell surface, is phosphorylated by activated type I BMP receptors (BMPRIs) and associates with SMAD4 to form a heteromeric complex which translocates into the nucleus acting as transcription factor. In turn, the hetero-trimeric complex recognizes cis-regulatory elements containing Smad Binding Elements (SBEs) to modulate the outcome of the signaling network. Non-phosphorylated SMAD5 has a cytoplasmic role in energy metabolism regulation by promoting mitochondrial respiration and glycolysis in response to cytoplasmic pH changes. Mechanistically, interacts with hexokinase 1/HK1 and thereby accelerates glycolysis. This is Mothers against decapentaplegic homolog 5 (Smad5) from Rattus norvegicus (Rat).